The primary structure comprises 359 residues: MNNARTNAKRRRLSSKQGGLSISEGKESNIPSVVEESKDNLEQASADDRLNFGDRILVKAPGYPWWPALLLRRKETKDSLNTNSSFNVLYKVLFFPDFNFAWVKRNSVKPLLDSEIAKFLGSSKRKSKELIEAYEASKTPPDLKEESSTDEEMDSLSAAEEKPNFLQKRKYHWETSLDESDAESISSGSLMSITSISEMYGPTVASTSRSSTQLSDQRYPLSSNFDHRGEAKGKGKQPLKNPQERGRISPSSPLNDQTKALMQRLLFFRHKLQKAFLSPDHLIVEEDFYNASKYLNAISDIPFLNYELITSTKLAKVLKRIAFLEHLENDELYDIRQKCKNLLYSWAMFLPNEPSIKGM.

Residues 1–37 (MNNARTNAKRRRLSSKQGGLSISEGKESNIPSVVEES) form a disordered region. In terms of domain architecture, PWWP spans 52–114 (FGDRILVKAP…RNSVKPLLDS (63 aa)). Disordered regions lie at residues 133–161 (AYEA…AAEE) and 204–255 (VAST…SPLN). Polar residues predominate over residues 204 to 224 (VASTSRSSTQLSDQRYPLSSN). Serine 252 is modified (phosphoserine).

As to quaternary structure, interacts with set9 and histone H4K20me1. Associates with nucleosomes.

Its subcellular location is the nucleus. Necessary for DNA damage checkpoint activation. Required for the association of set9 with chromatin and subsequent methylation of H4K20. Associates with H4K20me1 to increase the concentration of set9 on chromatin to perform H4K20me3. H4K20me3 is mainly enriched at heterochromatin and is required for proper heterochromatin assembly. The polypeptide is PWWP domain-containing protein 1 (pdp1) (Schizosaccharomyces pombe (strain 972 / ATCC 24843) (Fission yeast)).